Reading from the N-terminus, the 189-residue chain is Tumor protein p53-inducible protein 11 (189 aa).

The Cytoplasmic segment spans residues Met1–Arg63. Residue Ser14 is modified to Phosphoserine. The chain crosses the membrane as a helical span at residues Val64–Pro84. At Asp85–Gly108 the chain is on the extracellular side. The helical transmembrane segment at Ala109–Ile129 threads the bilayer. Residue Arg130 is a topological domain, cytoplasmic. A helical transmembrane segment spans residues Trp131–Leu151. Over Ala152–Gln159 the chain is Extracellular. A helical membrane pass occupies residues Gly160 to Tyr180. The Cytoplasmic segment spans residues Gln181–Val189.

It localises to the membrane. The chain is Tumor protein p53-inducible protein 11 (TP53I11) from Bos taurus (Bovine).